The following is a 344-amino-acid chain: Uroporphyrinogen decarboxylase (344 aa).

Residues 23 to 27, D73, Y149, T204, and H321 contribute to the substrate site; that span reads RQAGR.

Belongs to the uroporphyrinogen decarboxylase family. As to quaternary structure, homodimer.

It is found in the cytoplasm. The enzyme catalyses uroporphyrinogen III + 4 H(+) = coproporphyrinogen III + 4 CO2. Its pathway is porphyrin-containing compound metabolism; protoporphyrin-IX biosynthesis; coproporphyrinogen-III from 5-aminolevulinate: step 4/4. In terms of biological role, catalyzes the decarboxylation of four acetate groups of uroporphyrinogen-III to yield coproporphyrinogen-III. The polypeptide is Uroporphyrinogen decarboxylase (Francisella philomiragia subsp. philomiragia (strain ATCC 25017 / CCUG 19701 / FSC 153 / O#319-036)).